Here is a 713-residue protein sequence, read N- to C-terminus: P-loop NTPase domain-containing protein LPA1 homolog (713 aa).

3 disordered regions span residues 218 to 249 (AKKR…PIGK), 504 to 575 (TSQA…EDLS), and 650 to 713 (LDSP…APDK). Residues 231–246 (DFDKTRPLNDKPDGKP) are compositionally biased toward basic and acidic residues. Residues 504 to 531 (TSQAGSVNESWDNANEGTGSHVPSSSGS) are compositionally biased toward polar residues. The segment covering 533–544 (KKLDGHCKEIKE) has biased composition (basic and acidic residues). The span at 551 to 562 (SDDDEEEEEEAA) shows a compositional bias: acidic residues. A compositionally biased stretch (low complexity) spans 656–668 (ARSSSALPISASS).

Its function is as follows. Required for the accumulation of phytic acid in seeds. Phytic acid is the primary storage form of phosphorus in cereal grains and other plant seeds. The sequence is that of P-loop NTPase domain-containing protein LPA1 homolog from Oryza sativa subsp. japonica (Rice).